Reading from the N-terminus, the 65-residue chain is ACSKQLGEKCKCNKQCCGATVVCGTIWVGGKEVNKCMSKTSNNWFLNKLGEGMNAVANAFSISCN.

In terms of processing, contains 4 disulfide bonds. Expressed by the venom gland.

It is found in the secreted. Functionally, in vivo, intrathorax injection into crickets causes death. This is U15-hexatoxin-Mg1b from Macrothele gigas (Japanese funnel web spider).